The sequence spans 346 residues: Ribosomal RNA small subunit methyltransferase H (346 aa).

S-adenosyl-L-methionine is bound by residues 46-48 (GGY), Asp63, Phe90, Asp113, and Gln120. Residues 270 to 327 (GGSAGSRHMPETHMRLPSFTPAVKGAVGPTPEEEERNPRARSAKLRAGIRTENSPLED) are disordered.

The protein belongs to the methyltransferase superfamily. RsmH family.

It is found in the cytoplasm. The catalysed reaction is cytidine(1402) in 16S rRNA + S-adenosyl-L-methionine = N(4)-methylcytidine(1402) in 16S rRNA + S-adenosyl-L-homocysteine + H(+). Specifically methylates the N4 position of cytidine in position 1402 (C1402) of 16S rRNA. In Brucella ovis (strain ATCC 25840 / 63/290 / NCTC 10512), this protein is Ribosomal RNA small subunit methyltransferase H.